We begin with the raw amino-acid sequence, 496 residues long: MEIKVGNIPQLKWAGDALAIGLFEDAIKLTEDAIELTEEMAELDEMLSGTLSELIKETEFKGKANSSVSTRVGIKTSIRKIIVVGLGKLEKFKLDSLRQAAATCGRLAKKERCKTLGISLPMCQDADSTAIAITEGIELALHQDNRFKSEPENLGPDLEKVELIGLAASDEAIAHARKICSGVIFARELVAAPANSCTPITMAETAQTLAKEFGLTLEILEKEDCEKLGMGAFLGVAQGSDLPPKFIHVTYKPEVTPRRKLAIVGKGLTFDSGGLNLKVSGSGIEMMKIDMGGAGTTFGTIKAIAQLKPDVEVHFISAVTENMVSGHAIHPGDFLTASNGKIIEVNNTDAEGRLTLADALVFAEKLGVDAIIDLATLTGACVVALGNDIAGLWSPNDNLAAEITAAAEKAGEKMWRMPLEEKYFEGLKAMHADMKNTGPRPGGAITAALFLKQFVKNTPWAHLDIAGPVWVDTENGYNNQGATGYGVRTLVNWILS.

Positions 266 and 271 each coordinate Mn(2+). Residue Lys278 is part of the active site. Asp290, Asp349, and Glu351 together coordinate Mn(2+). Arg353 is an active-site residue.

The protein belongs to the peptidase M17 family. Mn(2+) serves as cofactor.

The protein localises to the cytoplasm. The catalysed reaction is Release of an N-terminal amino acid, Xaa-|-Yaa-, in which Xaa is preferably Leu, but may be other amino acids including Pro although not Arg or Lys, and Yaa may be Pro. Amino acid amides and methyl esters are also readily hydrolyzed, but rates on arylamides are exceedingly low.. It carries out the reaction Release of an N-terminal amino acid, preferentially leucine, but not glutamic or aspartic acids.. Its function is as follows. Presumably involved in the processing and regular turnover of intracellular proteins. Catalyzes the removal of unsubstituted N-terminal amino acids from various peptides. The sequence is that of Probable cytosol aminopeptidase from Trichodesmium erythraeum (strain IMS101).